The following is an 84-amino-acid chain: Small ribosomal subunit protein uS17 (84 aa).

The protein belongs to the universal ribosomal protein uS17 family. As to quaternary structure, part of the 30S ribosomal subunit.

Functionally, one of the primary rRNA binding proteins, it binds specifically to the 5'-end of 16S ribosomal RNA. This Enterobacter sp. (strain 638) protein is Small ribosomal subunit protein uS17.